The chain runs to 223 residues: Putative 3-methyladenine DNA glycosylase (223 aa).

It belongs to the DNA glycosylase MPG family.

This Rickettsia typhi (strain ATCC VR-144 / Wilmington) protein is Putative 3-methyladenine DNA glycosylase.